The primary structure comprises 481 residues: Glutamine synthetase (481 aa).

Residues 22–106 (NEVEFVDFRF…VFCDVYDVYK (85 aa)) form the GS beta-grasp domain. Residues 114–481 (PRSIAKKALQ…PFEFITTYSC (368 aa)) enclose the GS catalytic domain. Mg(2+)-binding residues include glutamate 139, glutamate 141, glutamate 223, and glutamate 230. Residues 274–275 (NG) and glycine 275 each bind L-glutamate. Histidine 279 lines the Mg(2+) pocket. ATP-binding positions include 281–283 (HVS) and serine 283. L-glutamate contacts are provided by arginine 331, glutamate 337, and arginine 349. Residues arginine 349 and arginine 354 each coordinate ATP. A Mg(2+)-binding site is contributed by glutamate 367. Position 369 (arginine 369) interacts with L-glutamate.

The protein belongs to the glutamine synthetase family. Oligomer of 12 subunits arranged in the form of two hexameric ring. The cofactor is Mg(2+).

The protein localises to the cytoplasm. The enzyme catalyses L-glutamate + NH4(+) + ATP = L-glutamine + ADP + phosphate + H(+). With respect to regulation, the activity of this enzyme could be controlled by adenylation under conditions of abundant glutamine. Its function is as follows. Catalyzes the ATP-dependent biosynthesis of glutamine from glutamate and ammonia. The protein is Glutamine synthetase of Helicobacter pylori (strain ATCC 700392 / 26695) (Campylobacter pylori).